We begin with the raw amino-acid sequence, 89 residues long: Small ribosomal subunit protein uS15 (89 aa).

Belongs to the universal ribosomal protein uS15 family. As to quaternary structure, part of the 30S ribosomal subunit. Forms a bridge to the 50S subunit in the 70S ribosome, contacting the 23S rRNA.

Its function is as follows. One of the primary rRNA binding proteins, it binds directly to 16S rRNA where it helps nucleate assembly of the platform of the 30S subunit by binding and bridging several RNA helices of the 16S rRNA. Forms an intersubunit bridge (bridge B4) with the 23S rRNA of the 50S subunit in the ribosome. This chain is Small ribosomal subunit protein uS15, found in Shewanella sp. (strain ANA-3).